Consider the following 4910-residue polypeptide: Midasin (4910 aa).

2 AAA-ATPase protomer regions span residues 305-528 (IQNS…DILF) and 636-975 (MEQI…TDII). ATP contacts are provided by residues 315–322 (GKAGSGKT) and 653–660 (GETGTGKT). Residues 695-803 (VNSKTVAVPI…KKFEAQSSSI (109 aa)) are interaction with RIX1. T1026 is subject to Phosphothreonine. AAA-ATPase protomer stretches follow at residues 1054–1280 (HYII…WALR), 1345–1624 (KGMR…VEFI), 1732–1985 (RVVR…QLLI), and 2036–2286 (VYES…DELH). ATP is bound by residues 1083–1090 (GPTSSGKT), 1368–1375 (GETGCGKT), 1747–1754 (GSPGVGKT), and 2054–2061 (GPSNSGKT). A linker region spans residues 2372-4075 (EVGKWANNVL…DGEGAQNNNK (1704 aa)). The residue at position 2971 (S2971) is a Phosphoserine. Disordered regions lie at residues 4045-4547 (SPQP…EKMD), 4555-4574 (SDIDAHDANNDVDSKKSGFI), and 4579-4600 (SEEDFENELSNEHFSADQEDDS). Acidic residues predominate over residues 4078 to 4088 (EQDEDLTEDAQ). The span at 4089-4098 (NENKEQQDKD) shows a compositional bias: basic and acidic residues. Acidic residues predominate over residues 4099–4154 (ERDDENEDDAVEMEGDMAGELEDLSNGEENDDEDTDSEEEELDEEIDDLNEDDPNA). The span at 4155–4174 (IDDKMWDDKASDNSKEKDTD) shows a compositional bias: basic and acidic residues. Composition is skewed to acidic residues over residues 4202–4244 (GDED…EDLE), 4251–4274 (ETLDLPEDMNLDSEHEESDEDVDM), and 4288–4358 (GNED…EEEL). A Phosphoserine modification is found at S4353. Basic and acidic residues predominate over residues 4359–4372 (KQDAAMEENKEKGG). T4388 bears the Phosphothreonine mark. Basic and acidic residues-rich tracts occupy residues 4435–4447 (DVTKNNEESREEA) and 4481–4495 (LEKNNERPDEFEHVE). A compositionally biased stretch (polar residues) spans 4498–4516 (NTETDTQALGSATQDQLQT). Positions 4517–4531 (IDEDMAIDDDREEQE) are enriched in acidic residues. S4555 bears the Phosphoserine mark. Residues 4557 to 4570 (IDAHDANNDVDSKK) show a composition bias toward basic and acidic residues. Positions 4704–4899 (QIMIALDDSK…SELPEMLSLI (196 aa)) constitute a VWFA domain.

It belongs to the midasin family. Associates with pre-60S ribosomes in the nucleoplasm. Interacts (via its hexameric AAA ATPase ring) with the RIX1 complex (via RIX1); this interaction is crucial for recruitment of MDN1 to the pre-ribosomal particle. Interacts (via VWFA/MIDAS domain) with YTM1 (via UBL domain). Interacts (via VWFA/MIDAS domain) with RSA4 (via UBL domain).

It is found in the nucleus. The protein localises to the nucleolus. The protein resides in the nucleoplasm. Nuclear chaperone required for maturation and nuclear export of pre-60S ribosome subunits. Functions at successive maturation steps to remove ribosomal factors at critical transition points, first driving the exit of early pre-60S particles from the nucleolus and then driving late pre-60S particles from the nucleus. At an early stage in 60S maturation, mediates the dissociation of the NOP7 complex (YTM1-ERB1-NOP7) from early pre-60S particles, rendering them competent for export from the nucleolus to the nucleoplasm. Subsequently recruited to the nucleoplasmic particles through interaction with the RIX1 complex. This binding is only possible if the 5S RNP at the central protuberance has undergone the rotation to complete its maturation. After remodeling, removes the ribosome biogenesis factor RSA4 in an ATP hydrolysis-driven step from pre-60S ribosomal subunits, rendering them competent for export from the nucleoplasm to the cytoplasm. Activates the GTPase activity of NOG2, which disengages from the pre-60S particle upon GTP hydrolysis, thus freeing its binding site for the nuclear export factor NMD3. In Saccharomyces cerevisiae (strain ATCC 204508 / S288c) (Baker's yeast), this protein is Midasin (MDN1).